Reading from the N-terminus, the 346-residue chain is Annexin A1 (346 aa).

At Ala2 the chain carries N-acetylalanine. At Ser5 the chain carries Phosphoserine; by TRPM7. Gln19 participates in a covalent cross-link: Isoglutamyl lysine isopeptide (Gln-Lys) (interchain with K-?). The residue at position 21 (Tyr21) is a Phosphotyrosine; by EGFR. The residue at position 27 (Ser27) is a Phosphoserine; by PKC. A phosphoserine mark is found at Ser34 and Ser37. Phosphothreonine is present on Thr41. Annexin repeat units follow at residues 42–113, 114–185, 197–269, and 273–344; these read FNPS…ALLK, TPAQ…SLAK, DLAD…AIVK, and SKPA…ALCG. Position 58 is an N6-acetyllysine (Lys58). Positions 59, 60, 62, 97, 100, 105, 127, 129, 131, 132, and 134 each coordinate Ca(2+). Thr136 is subject to Phosphothreonine. Ca(2+) contacts are provided by Asp171, Gly210, and Arg213. Lys214 is covalently cross-linked (Glycyl lysine isopeptide (Lys-Gly) (interchain with G-Cter in SUMO1); alternate). Residue Lys214 forms a Glycyl lysine isopeptide (Lys-Gly) (interchain with G-Cter in SUMO2); alternate linkage. Gly215 lines the Ca(2+) pocket. N6-acetyllysine is present on Lys239. Residues Asp253, Glu255, and Leu256 each coordinate Ca(2+). Lys257 participates in a covalent cross-link: Glycyl lysine isopeptide (Lys-Gly) (interchain with G-Cter in SUMO1). Glu261, Met286, Gly288, and Gly290 together coordinate Ca(2+). At Lys312 the chain carries N6-acetyllysine. Cys324 and Cys343 are disulfide-bonded. 3 residues coordinate Ca(2+): Leu328, Glu330, and Thr331. Residue Lys332 forms a Glycyl lysine isopeptide (Lys-Gly) (interchain with G-Cter in SUMO1) linkage. Glu336 contributes to the Ca(2+) binding site.

It belongs to the annexin family. As to quaternary structure, homodimer; non-covalently linked. Homodimer; linked by transglutamylation. Homodimers linked by transglutamylation are observed in placenta, but not in other tissues. Interacts with S100A11. Heterotetramer, formed by two molecules each of S100A11 and ANXA1. Interacts with DYSF. Interacts with EGFR. Post-translationally, phosphorylated by protein kinase C, EGFR and TRPM7. Phosphorylated in response to EGF treatment. Sumoylated. In terms of processing, proteolytically cleaved by cathepsin CTSG to release the active N-terminal peptide Ac2-26.

The protein resides in the nucleus. Its subcellular location is the cytoplasm. The protein localises to the cell projection. It is found in the cilium. It localises to the basolateral cell membrane. The protein resides in the lateral cell membrane. Its subcellular location is the cell membrane. The protein localises to the apical cell membrane. It is found in the membrane. It localises to the early endosome. The protein resides in the cytoplasmic vesicle membrane. Its subcellular location is the endosome membrane. The protein localises to the secreted. It is found in the extracellular space. It localises to the extracellular exosome. The protein resides in the cytoplasmic vesicle. Its subcellular location is the secretory vesicle lumen. The protein localises to the phagocytic cup. Functionally, plays important roles in the innate immune response as effector of glucocorticoid-mediated responses and regulator of the inflammatory process. Has anti-inflammatory activity. Plays a role in glucocorticoid-mediated down-regulation of the early phase of the inflammatory response. Contributes to the adaptive immune response by enhancing signaling cascades that are triggered by T-cell activation, regulates differentiation and proliferation of activated T-cells. Promotes the differentiation of T-cells into Th1 cells and negatively regulates differentiation into Th2 cells. Has no effect on unstimulated T-cells. Negatively regulates hormone exocytosis via activation of the formyl peptide receptors and reorganization of the actin cytoskeleton. Has high affinity for Ca(2+) and can bind up to eight Ca(2+) ions. Displays Ca(2+)-dependent binding to phospholipid membranes. Plays a role in the formation of phagocytic cups and phagosomes. Plays a role in phagocytosis by mediating the Ca(2+)-dependent interaction between phagosomes and the actin cytoskeleton. Its function is as follows. Functions at least in part by activating the formyl peptide receptors and downstream signaling cascades. Promotes chemotaxis of granulocytes and monocytes via activation of the formyl peptide receptors. Promotes rearrangement of the actin cytoskeleton, cell polarization and cell migration. Promotes resolution of inflammation and wound healing. Acts via neutrophil N-formyl peptide receptors to enhance the release of CXCL2. The sequence is that of Annexin A1 (ANXA1) from Pan troglodytes (Chimpanzee).